The sequence spans 69 residues: uncharacterized protein (69 aa).

Residues M1–S21 form the signal peptide.

It is found in the secreted. This is an uncharacterized protein from Dictyostelium discoideum (Social amoeba).